The following is a 689-amino-acid chain: Potassium-transporting ATPase ATP-binding subunit (689 aa).

4 helical membrane passes run 35–55 (VMFVVYIGSILTTAIWLAILA), 62–82 (AAFTGSIAMWLWFTVLFANFA), 220–240 (ALTILLVALTLVFVLATATLF), and 260–280 (VLVALLVCLIPTTIGGLLSAI). D313 serves as the catalytic 4-aspartylphosphate intermediate. Residues D350, E354, 383–390 (FSAQTRMS), and K401 contribute to the ATP site. Residues D524 and D528 each coordinate Mg(2+). Transmembrane regions (helical) follow at residues 594–614 (FAIIPAAFAATYPQLNALNVM), 622–642 (AIMSAVIFNALVIVFLIPLAL), and 665–685 (VGGLLVPFVGIKLIDLLLVAL).

It belongs to the cation transport ATPase (P-type) (TC 3.A.3) family. Type IA subfamily. As to quaternary structure, the system is composed of three essential subunits: KdpA, KdpB and KdpC.

It is found in the cell inner membrane. It catalyses the reaction K(+)(out) + ATP + H2O = K(+)(in) + ADP + phosphate + H(+). Functionally, part of the high-affinity ATP-driven potassium transport (or Kdp) system, which catalyzes the hydrolysis of ATP coupled with the electrogenic transport of potassium into the cytoplasm. This subunit is responsible for energy coupling to the transport system and for the release of the potassium ions to the cytoplasm. This is Potassium-transporting ATPase ATP-binding subunit from Serratia proteamaculans (strain 568).